The chain runs to 312 residues: tRNA-cytidine(32) 2-sulfurtransferase (312 aa).

The PP-loop motif signature appears at Ser48–Ser53. 3 residues coordinate [4Fe-4S] cluster: Cys123, Cys126, and Cys214.

It belongs to the TtcA family. Homodimer. Requires Mg(2+) as cofactor. [4Fe-4S] cluster is required as a cofactor.

It is found in the cytoplasm. It carries out the reaction cytidine(32) in tRNA + S-sulfanyl-L-cysteinyl-[cysteine desulfurase] + AH2 + ATP = 2-thiocytidine(32) in tRNA + L-cysteinyl-[cysteine desulfurase] + A + AMP + diphosphate + H(+). The protein operates within tRNA modification. Catalyzes the ATP-dependent 2-thiolation of cytidine in position 32 of tRNA, to form 2-thiocytidine (s(2)C32). The sulfur atoms are provided by the cysteine/cysteine desulfurase (IscS) system. In Mannheimia succiniciproducens (strain KCTC 0769BP / MBEL55E), this protein is tRNA-cytidine(32) 2-sulfurtransferase.